A 187-amino-acid polypeptide reads, in one-letter code: Auxin-binding protein T85 (187 aa).

The first 20 residues, 1–20, serve as a signal peptide directing secretion; sequence MARHVLVVVAVLLFATAEAS. A disulfide bridge links C22 with C177. Zn(2+) contacts are provided by H78, H80, and E84. An N-linked (GlcNAc...) asparagine glycan is attached at N117. H128 contributes to the Zn(2+) binding site. The short motif at 184 to 187 is the Prevents secretion from ER element; it reads KDEL.

In terms of assembly, homodimer.

It is found in the endoplasmic reticulum lumen. This is probably a receptor for the plant hormone auxin. The protein is Auxin-binding protein T85 (T85) of Nicotiana tabacum (Common tobacco).